Reading from the N-terminus, the 192-residue chain is EF-hand protein 5 (192 aa).

Positions 1-36 (MKDKAPVSSQQDHFSRGGAVGGKPISDVRGTSRPFY) are disordered. EF-hand domains follow at residues 46-80 (AELA…GLHL), 81-118 (SDEE…EVDD), 119-154 (TMLE…GGEC), and 155-190 (STPE…HRLN). Residues T100, E102, D107, D132, and T136 each coordinate Ca(2+).

This chain is EF-hand protein 5, found in Trypanosoma brucei brucei.